A 309-amino-acid chain; its full sequence is MILTVTLNPAIDVSYPLNELKCDTVNRVVDVTKTPGGKGLNVSRVLNDFGETVKATGCIGGESGDFIINHLPDSILSRFYKISGDTRTCIAILHEGNQTEILEKGPLLSVDEIDGFTHHFKYLLNDVDVVTLSGSLPAGMPDDYYQKLIKIANLNGKKTVLDCSGNALEAVLKGDSKPTVIKPNLEELSQLLGKEMTKDFEALKEVLQDELFEGIEWIIVSLGADGVFAKHKDTFYNVDIPKIKIVSAVGSGDSTVAGIASGLANDEDDRALLTKANVLGMLNAQEKTTGHVNMANYDKLYQSIKIKEV.

This sequence belongs to the carbohydrate kinase PfkB family. LacC subfamily.

The enzyme catalyses D-tagatofuranose 6-phosphate + ATP = D-tagatofuranose 1,6-bisphosphate + ADP + H(+). It participates in carbohydrate metabolism; D-tagatose 6-phosphate degradation; D-glyceraldehyde 3-phosphate and glycerone phosphate from D-tagatose 6-phosphate: step 1/2. This chain is Tagatose-6-phosphate kinase, found in Streptococcus pyogenes serotype M2 (strain MGAS10270).